Consider the following 174-residue polypeptide: Chorismate pyruvate-lyase (174 aa).

The substrate site is built by methionine 36, arginine 78, leucine 116, and glutamate 157.

Belongs to the UbiC family. Monomer.

It is found in the cytoplasm. The catalysed reaction is chorismate = 4-hydroxybenzoate + pyruvate. It participates in cofactor biosynthesis; ubiquinone biosynthesis. Removes the pyruvyl group from chorismate, with concomitant aromatization of the ring, to provide 4-hydroxybenzoate (4HB) for the ubiquinone pathway. The chain is Chorismate pyruvate-lyase from Erwinia tasmaniensis (strain DSM 17950 / CFBP 7177 / CIP 109463 / NCPPB 4357 / Et1/99).